The chain runs to 138 residues: Membrane glycoprotein UL139 (138 aa).

Positions 1–15 (MLWILVLFALAASAS) are cleaved as a signal peptide. The interval 17 to 37 (TTTGTSSNSSQSTSAGTTNTT) is disordered. The chain crosses the membrane as a helical span at residues 64-84 (GWTLSGLLLIFTCCLCCFWLV). A compositionally biased stretch (polar residues) spans 113-129 (SDATLPMGTTGSYTPPQ). The interval 113 to 138 (SDATLPMGTTGSYTPPQDGSFPPPPR) is disordered.

It is found in the host membrane. The polypeptide is Membrane glycoprotein UL139 (UL139) (Homo sapiens (Human)).